A 195-amino-acid chain; its full sequence is Inhibitor of glycogen debranching 1 (195 aa).

Residues 1-18 (MTDPHLNTPQVSTSPTFE) show a composition bias toward polar residues. The disordered stretch occupies residues 1 to 101 (MTDPHLNTPQ…ERRSSGPMDF (101 aa)). Ser-64 bears the Phosphoserine mark. Position 65 is a phosphothreonine (Thr-65). The segment covering 75–95 (EQARERESSIGEHAPGAERRS) has biased composition (basic and acidic residues). 2 positions are modified to phosphoserine: Ser-95 and Ser-96. Position 132 is a phosphothreonine (Thr-132). The disordered stretch occupies residues 146 to 175 (NSYLDNNSNGNSARVPHGSPPQLGTRRKSS). Positions 148 to 157 (YLDNNSNGNS) are enriched in polar residues. Residue Ser-164 is modified to Phosphoserine.

As to quaternary structure, interacts with GDB1.

Its subcellular location is the cytoplasm. In terms of biological role, acts as an inhibitor of GDB1, enhancing the ability of cells to store glucose as glycogen. The polypeptide is Inhibitor of glycogen debranching 1 (IGD1) (Saccharomyces cerevisiae (strain ATCC 204508 / S288c) (Baker's yeast)).